A 178-amino-acid polypeptide reads, in one-letter code: Interleukin-10 (178 aa).

A signal peptide spans Met-1–Ala-18. 2 disulfides stabilise this stretch: Cys-30-Cys-126 and Cys-80-Cys-132. A glycan (N-linked (GlcNAc...) asparagine) is linked at Asn-134.

The protein belongs to the IL-10 family. As to quaternary structure, homodimer. Interacts with IL10RA and IL10RB.

The protein localises to the secreted. In terms of biological role, major immune regulatory cytokine that acts on many cells of the immune system where it has profound anti-inflammatory functions, limiting excessive tissue disruption caused by inflammation. Mechanistically, IL10 binds to its heterotetrameric receptor comprising IL10RA and IL10RB leading to JAK1 and STAT2-mediated phosphorylation of STAT3. In turn, STAT3 translocates to the nucleus where it drives expression of anti-inflammatory mediators. Targets antigen-presenting cells (APCs) such as macrophages and monocytes and inhibits their release of pro-inflammatory cytokines including granulocyte-macrophage colony-stimulating factor /GM-CSF, granulocyte colony-stimulating factor/G-CSF, IL-1 alpha, IL-1 beta, IL-6, IL-8 and TNF-alpha. Also interferes with antigen presentation by reducing the expression of MHC-class II and co-stimulatory molecules, thereby inhibiting their ability to induce T cell activation. In addition, controls the inflammatory response of macrophages by reprogramming essential metabolic pathways including mTOR signaling. The polypeptide is Interleukin-10 (IL10) (Callithrix jacchus (White-tufted-ear marmoset)).